Here is a 117-residue protein sequence, read N- to C-terminus: Fluoride-specific ion channel FluC 2 (117 aa).

4 helical membrane-spanning segments follow: residues 4-24 (FLIG…GDII), 31-51 (KFPW…GIIT), 59-79 (LSMI…TFMY), and 94-114 (LIYI…GEFI). G69 and T72 together coordinate Na(+).

This sequence belongs to the fluoride channel Fluc/FEX (TC 1.A.43) family.

It is found in the cell membrane. It carries out the reaction fluoride(in) = fluoride(out). Its activity is regulated as follows. Na(+) is not transported, but it plays an essential structural role and its presence is essential for fluoride channel function. Functionally, fluoride-specific ion channel. Important for reducing fluoride concentration in the cell, thus reducing its toxicity. This chain is Fluoride-specific ion channel FluC 2, found in Clostridium acetobutylicum (strain ATCC 824 / DSM 792 / JCM 1419 / IAM 19013 / LMG 5710 / NBRC 13948 / NRRL B-527 / VKM B-1787 / 2291 / W).